A 281-amino-acid chain; its full sequence is 2-dehydro-3-deoxyphosphooctonate aldolase (281 aa).

This sequence belongs to the KdsA family.

The protein localises to the cytoplasm. It carries out the reaction D-arabinose 5-phosphate + phosphoenolpyruvate + H2O = 3-deoxy-alpha-D-manno-2-octulosonate-8-phosphate + phosphate. It functions in the pathway carbohydrate biosynthesis; 3-deoxy-D-manno-octulosonate biosynthesis; 3-deoxy-D-manno-octulosonate from D-ribulose 5-phosphate: step 2/3. The protein operates within bacterial outer membrane biogenesis; lipopolysaccharide biosynthesis. This is 2-dehydro-3-deoxyphosphooctonate aldolase from Pseudomonas syringae pv. syringae (strain B728a).